A 137-amino-acid chain; its full sequence is Large ribosomal subunit protein uL16 (137 aa).

This sequence belongs to the universal ribosomal protein uL16 family. Part of the 50S ribosomal subunit.

In terms of biological role, binds 23S rRNA and is also seen to make contacts with the A and possibly P site tRNAs. This Ruegeria pomeroyi (strain ATCC 700808 / DSM 15171 / DSS-3) (Silicibacter pomeroyi) protein is Large ribosomal subunit protein uL16.